The sequence spans 179 residues: Large ribosomal subunit protein uL6 (179 aa).

Belongs to the universal ribosomal protein uL6 family. As to quaternary structure, part of the 50S ribosomal subunit.

Its function is as follows. This protein binds to the 23S rRNA, and is important in its secondary structure. It is located near the subunit interface in the base of the L7/L12 stalk, and near the tRNA binding site of the peptidyltransferase center. This chain is Large ribosomal subunit protein uL6, found in Synechococcus sp. (strain CC9311).